We begin with the raw amino-acid sequence, 286 residues long: Bifunctional protein FolD (286 aa).

NADP(+)-binding positions include 166-168 (GAS) and I232.

This sequence belongs to the tetrahydrofolate dehydrogenase/cyclohydrolase family. In terms of assembly, homodimer.

The enzyme catalyses (6R)-5,10-methylene-5,6,7,8-tetrahydrofolate + NADP(+) = (6R)-5,10-methenyltetrahydrofolate + NADPH. It catalyses the reaction (6R)-5,10-methenyltetrahydrofolate + H2O = (6R)-10-formyltetrahydrofolate + H(+). Its pathway is one-carbon metabolism; tetrahydrofolate interconversion. In terms of biological role, catalyzes the oxidation of 5,10-methylenetetrahydrofolate to 5,10-methenyltetrahydrofolate and then the hydrolysis of 5,10-methenyltetrahydrofolate to 10-formyltetrahydrofolate. The sequence is that of Bifunctional protein FolD from Vibrio parahaemolyticus serotype O3:K6 (strain RIMD 2210633).